The following is a 352-amino-acid chain: tRNA-specific 2-thiouridylase MnmA (352 aa).

ATP-binding positions include 6-13 (AMSGGVDS) and L32. C101 (nucleophile) is an active-site residue. Residues C101 and C194 are joined by a disulfide bond. ATP is bound at residue G125. An interaction with tRNA region spans residues 144 to 146 (KDQ). C194 serves as the catalytic Cysteine persulfide intermediate.

Belongs to the MnmA/TRMU family.

It is found in the cytoplasm. The catalysed reaction is S-sulfanyl-L-cysteinyl-[protein] + uridine(34) in tRNA + AH2 + ATP = 2-thiouridine(34) in tRNA + L-cysteinyl-[protein] + A + AMP + diphosphate + H(+). Catalyzes the 2-thiolation of uridine at the wobble position (U34) of tRNA, leading to the formation of s(2)U34. This Frankia alni (strain DSM 45986 / CECT 9034 / ACN14a) protein is tRNA-specific 2-thiouridylase MnmA.